A 358-amino-acid polypeptide reads, in one-letter code: 3-dehydroquinate synthase (358 aa).

Residues 105–109, 129–130, lysine 142, lysine 151, and 169–172 each bind NAD(+); these read GVVGD, TT, and TLKT. Residues glutamate 184, histidine 245, and histidine 262 each coordinate Zn(2+).

The protein belongs to the sugar phosphate cyclases superfamily. Dehydroquinate synthase family. NAD(+) is required as a cofactor. Requires Co(2+) as cofactor. Zn(2+) serves as cofactor.

Its subcellular location is the cytoplasm. It carries out the reaction 7-phospho-2-dehydro-3-deoxy-D-arabino-heptonate = 3-dehydroquinate + phosphate. It participates in metabolic intermediate biosynthesis; chorismate biosynthesis; chorismate from D-erythrose 4-phosphate and phosphoenolpyruvate: step 2/7. Its function is as follows. Catalyzes the conversion of 3-deoxy-D-arabino-heptulosonate 7-phosphate (DAHP) to dehydroquinate (DHQ). The chain is 3-dehydroquinate synthase from Enterococcus faecalis (strain ATCC 47077 / OG1RF).